Consider the following 526-residue polypeptide: Peptide chain release factor 3 (526 aa).

A tr-type G domain is found at asparagine 9 to glutamine 277. Residues serine 18–threonine 25, aspartate 86–histidine 90, and asparagine 140–aspartate 143 contribute to the GTP site.

The protein belongs to the TRAFAC class translation factor GTPase superfamily. Classic translation factor GTPase family. PrfC subfamily.

Its subcellular location is the cytoplasm. In terms of biological role, increases the formation of ribosomal termination complexes and stimulates activities of RF-1 and RF-2. It binds guanine nucleotides and has strong preference for UGA stop codons. It may interact directly with the ribosome. The stimulation of RF-1 and RF-2 is significantly reduced by GTP and GDP, but not by GMP. This chain is Peptide chain release factor 3, found in Legionella pneumophila (strain Paris).